We begin with the raw amino-acid sequence, 80 residues long: UPF0181 protein SG1330 (80 aa).

A disordered region spans residues 58–80 (TEVLETPAARAETDPYDSNPDDD).

Belongs to the UPF0181 family.

The polypeptide is UPF0181 protein SG1330 (Sodalis glossinidius (strain morsitans)).